Here is a 95-residue protein sequence, read N- to C-terminus: Selenoprotein K (95 aa).

Residues 20-42 (LSFLTDMFWGITDFIVMFFQSII) traverse the membrane as a helical segment. The interval 48-95 (RRGCQNSSSRTRFDDGRGPPGNPRRRMGRIDHNSGPNAPPMSGGGUGR) is disordered. A non-standard amino acid (selenocysteine) is located at residue Sec93.

It belongs to the selenoprotein K family.

It is found in the endoplasmic reticulum membrane. The protein localises to the cell membrane. Required for Ca(2+) flux in immune cells and plays a role in T-cell proliferation and in T-cell and neutrophil migration. Involved in endoplasmic reticulum-associated degradation (ERAD) of soluble glycosylated proteins. Required for cell surface expression of CD36 and involved in macrophage uptake of low-density lipoprotein and in foam cell formation. Required for palmitoylation. The polypeptide is Selenoprotein K (selenok) (Xenopus tropicalis (Western clawed frog)).